We begin with the raw amino-acid sequence, 271 residues long: Cytosolic Fe-S cluster assembly factor NUBP2 (271 aa).

Position 1 is an N-acetylmethionine (M1). An ATP-binding site is contributed by 22–29 (GKGGVGKS). [4Fe-4S] cluster-binding residues include C196 and C199.

The protein belongs to the Mrp/NBP35 ATP-binding proteins family. NUBP2/CFD1 subfamily. As to quaternary structure, heterotetramer of 2 NUBP1 and 2 NUBP2 chains. Interacts with KIFC1. Interacts with NUBP1. [4Fe-4S] cluster is required as a cofactor.

It localises to the nucleus. Its subcellular location is the cytoplasm. The protein resides in the cytoskeleton. It is found in the microtubule organizing center. The protein localises to the centrosome. It localises to the cilium axoneme. Its subcellular location is the centriole. Functionally, component of the cytosolic iron-sulfur (Fe/S) protein assembly (CIA) machinery. Required for maturation of extramitochondrial Fe-S proteins. The NUBP1-NUBP2 heterotetramer forms a Fe-S scaffold complex, mediating the de novo assembly of an Fe-S cluster and its transfer to target apoproteins. Negatively regulates cilium formation and structure. The protein is Cytosolic Fe-S cluster assembly factor NUBP2 of Bos taurus (Bovine).